We begin with the raw amino-acid sequence, 418 residues long: Hydroxysteroid dehydrogenase-like protein 2 (418 aa).

NADP(+) is bound by residues 17 to 23 (GASRGIG), Lys-42, and Asp-74. Position 42 is an N6-(2-hydroxyisobutyryl)lysine (Lys-42). Position 116 is an N6-acetyllysine (Lys-116). The active-site Proton acceptor is Tyr-168. Lys-172 contacts NADP(+). In terms of domain architecture, SCP2 spans 306–415 (RSGAVEETFR…KLEKLMNQMN (110 aa)). Lys-318 is modified (N6-succinyllysine).

The protein belongs to the short-chain dehydrogenases/reductases (SDR) family.

The protein resides in the peroxisome. The protein localises to the mitochondrion. Functionally, has apparently no steroid dehydrogenase activity. Controls bile acid (BA) and lipid metabolism in response to nutritional cues. The chain is Hydroxysteroid dehydrogenase-like protein 2 (HSDL2) from Bos taurus (Bovine).